The chain runs to 97 residues: MKMPKHNDNYQYPLDETWTTAEIIKVTTFYQAIEAANEGTIATADLLAAYRDFKTVVPAKSEEKRLARDYEAASGYRIYQTMRAAQETNKQRFQYRD.

This sequence belongs to the UPF0223 family.

This is UPF0223 protein lp_2149 from Lactiplantibacillus plantarum (strain ATCC BAA-793 / NCIMB 8826 / WCFS1) (Lactobacillus plantarum).